Consider the following 330-residue polypeptide: Aspartate--ammonia ligase (330 aa).

This sequence belongs to the class-II aminoacyl-tRNA synthetase family. AsnA subfamily.

Its subcellular location is the cytoplasm. It carries out the reaction L-aspartate + NH4(+) + ATP = L-asparagine + AMP + diphosphate + H(+). It participates in amino-acid biosynthesis; L-asparagine biosynthesis; L-asparagine from L-aspartate (ammonia route): step 1/1. In Escherichia coli O81 (strain ED1a), this protein is Aspartate--ammonia ligase.